A 268-amino-acid polypeptide reads, in one-letter code: Ribosomal RNA small subunit methyltransferase A (268 aa).

S-adenosyl-L-methionine is bound by residues Asn16, Leu18, Gly43, Glu64, Asp89, and Asn110.

The protein belongs to the class I-like SAM-binding methyltransferase superfamily. rRNA adenine N(6)-methyltransferase family. RsmA subfamily.

It is found in the cytoplasm. It catalyses the reaction adenosine(1518)/adenosine(1519) in 16S rRNA + 4 S-adenosyl-L-methionine = N(6)-dimethyladenosine(1518)/N(6)-dimethyladenosine(1519) in 16S rRNA + 4 S-adenosyl-L-homocysteine + 4 H(+). Its function is as follows. Specifically dimethylates two adjacent adenosines (A1518 and A1519) in the loop of a conserved hairpin near the 3'-end of 16S rRNA in the 30S particle. May play a critical role in biogenesis of 30S subunits. This is Ribosomal RNA small subunit methyltransferase A from Pseudomonas savastanoi pv. phaseolicola (strain 1448A / Race 6) (Pseudomonas syringae pv. phaseolicola (strain 1448A / Race 6)).